Here is a 60-residue protein sequence, read N- to C-terminus: Cytotoxin 2 (60 aa).

4 disulfide bridges follow: cysteine 3/cysteine 21, cysteine 14/cysteine 38, cysteine 42/cysteine 53, and cysteine 54/cysteine 59.

The protein belongs to the three-finger toxin family. Short-chain subfamily. Type IA cytotoxin sub-subfamily. Monomer in solution; Homodimer and oligomer in the presence of negatively charged lipids forming a pore with a size ranging between 20 and 30 Angstroms. Expressed by the venom gland.

It localises to the secreted. Its subcellular location is the target cell membrane. Shows cytolytic activity on many different cells by forming pore in lipid membranes. In vivo, increases heart rate or kills the animal by cardiac arrest. In addition, it binds to heparin with high affinity, interacts with Kv channel-interacting protein 1 (KCNIP1) in a calcium-independent manner, and binds to integrin alpha-V/beta-3 (ITGAV/ITGB3) with moderate affinity. The polypeptide is Cytotoxin 2 (Naja mossambica (Mozambique spitting cobra)).